A 736-amino-acid chain; its full sequence is Dimethylamine dehydrogenase (736 aa).

Cys-31 is subject to S-6-FMN cysteine. Tyr-176 to His-179 is a binding site for substrate. The Proton donor role is filled by Tyr-181. Residues Arg-229 and Arg-329 each coordinate FMN. The [4Fe-4S] cluster site is built by Cys-352, Cys-355, Cys-358, and Cys-371. Asp-398–Thr-427 is a binding site for ADP.

This sequence in the N-terminal section; belongs to the NADH:flavin oxidoreductase/NADH oxidase family. FMN serves as cofactor. The cofactor is [4Fe-4S] cluster.

The catalysed reaction is dimethylamine + oxidized [electron-transfer flavoprotein] + H2O + H(+) = methylamine + reduced [electron-transfer flavoprotein] + formaldehyde. The chain is Dimethylamine dehydrogenase (dmd) from Hyphomicrobium sp. (strain x).